Reading from the N-terminus, the 255-residue chain is Proteasome subunit alpha (255 aa).

It belongs to the peptidase T1A family. As to quaternary structure, the 20S proteasome core is composed of 14 alpha and 14 beta subunits that assemble into four stacked heptameric rings, resulting in a barrel-shaped structure. The two inner rings, each composed of seven catalytic beta subunits, are sandwiched by two outer rings, each composed of seven alpha subunits. The catalytic chamber with the active sites is on the inside of the barrel. Has a gated structure, the ends of the cylinder being occluded by the N-termini of the alpha-subunits. Is capped at one or both ends by the proteasome regulatory ATPase, PAN.

The protein resides in the cytoplasm. The formation of the proteasomal ATPase PAN-20S proteasome complex, via the docking of the C-termini of PAN into the intersubunit pockets in the alpha-rings, triggers opening of the gate for substrate entry. Interconversion between the open-gate and close-gate conformations leads to a dynamic regulation of the 20S proteasome proteolysis activity. Component of the proteasome core, a large protease complex with broad specificity involved in protein degradation. This chain is Proteasome subunit alpha, found in Natronomonas pharaonis (strain ATCC 35678 / DSM 2160 / CIP 103997 / JCM 8858 / NBRC 14720 / NCIMB 2260 / Gabara) (Halobacterium pharaonis).